Reading from the N-terminus, the 178-residue chain is uncharacterized protein (178 aa).

The next 2 membrane-spanning stretches (helical) occupy residues 6-26 (AIFG…VSGL) and 154-174 (KELV…AMLI).

It is found in the cell membrane. This is an uncharacterized protein from Methanocaldococcus jannaschii (strain ATCC 43067 / DSM 2661 / JAL-1 / JCM 10045 / NBRC 100440) (Methanococcus jannaschii).